We begin with the raw amino-acid sequence, 168 residues long: Calcium-binding protein 2 (168 aa).

EF-hand domains follow at residues 13-48, 48-83, 88-123, and 124-159; these read GMEK…AGKK, KNPE…MNDE, VLNW…QGAE, and DPEL…KKFS. 19 residues coordinate Ca(2+): aspartate 26, aspartate 28, asparagine 30, lysine 32, glutamate 37, aspartate 61, aspartate 63, asparagine 65, glutamate 67, glutamate 72, aspartate 101, aspartate 103, aspartate 105, lysine 107, glutamate 112, aspartate 137, aspartate 139, aspartate 141, and glutamate 148.

Not known; probably binds four calcium ions. In Dictyostelium discoideum (Social amoeba), this protein is Calcium-binding protein 2 (cbp2).